Reading from the N-terminus, the 260-residue chain is MISSLWIAKTGLDAQQTNMDVIANNLANVSTNGFKRQRAVFEDLLYQTIRQPGAQSSEQTTLPSGLQIGTGVRPVATERLHSQGNLSQTNNSKDVAIKGQGFFQVMLPDGTSAYTRDGSFQVDQNGQLVTAGGFQVQPAITIPANALSITIGRDGVVSVTQQGQAAPVQVGQLNLTTFMNDTGLESIGENLYIETQSSGAPNESTPGLNGAGLLYQGYVETSNVNVAEELVNMIQVQRAYEINSKAVSTTDQMLQKLTQL.

Belongs to the flagella basal body rod proteins family. The basal body constitutes a major portion of the flagellar organelle and consists of four rings (L,P,S, and M) mounted on a central rod. The rod consists of about 26 subunits of FlgG in the distal portion, and FlgB, FlgC and FlgF are thought to build up the proximal portion of the rod with about 6 subunits each.

The protein localises to the bacterial flagellum basal body. The sequence is that of Flagellar basal-body rod protein FlgG (flgG) from Salmonella typhi.